The sequence spans 116 residues: NADPH-dependent 7-cyano-7-deazaguanine reductase (116 aa).

Residue cysteine 31 is the Thioimide intermediate of the active site. Aspartate 38 serves as the catalytic Proton donor. Substrate contacts are provided by residues 53–55 (IEL) and 72–73 (YE).

This sequence belongs to the GTP cyclohydrolase I family. QueF type 1 subfamily.

The protein resides in the cytoplasm. The enzyme catalyses 7-aminomethyl-7-carbaguanine + 2 NADP(+) = 7-cyano-7-deazaguanine + 2 NADPH + 3 H(+). It functions in the pathway tRNA modification; tRNA-queuosine biosynthesis. Its function is as follows. Catalyzes the NADPH-dependent reduction of 7-cyano-7-deazaguanine (preQ0) to 7-aminomethyl-7-deazaguanine (preQ1). This is NADPH-dependent 7-cyano-7-deazaguanine reductase from Pelodictyon phaeoclathratiforme (strain DSM 5477 / BU-1).